The sequence spans 172 residues: Adenine phosphoribosyltransferase (172 aa).

The protein belongs to the purine/pyrimidine phosphoribosyltransferase family. As to quaternary structure, homodimer.

It is found in the cytoplasm. It catalyses the reaction AMP + diphosphate = 5-phospho-alpha-D-ribose 1-diphosphate + adenine. It participates in purine metabolism; AMP biosynthesis via salvage pathway; AMP from adenine: step 1/1. Functionally, catalyzes a salvage reaction resulting in the formation of AMP, that is energically less costly than de novo synthesis. The polypeptide is Adenine phosphoribosyltransferase (Hydrogenovibrio crunogenus (strain DSM 25203 / XCL-2) (Thiomicrospira crunogena)).